Consider the following 79-residue polypeptide: UPF0337 protein YhjA (79 aa).

Positions 1 to 30 (MALNDKLDATKDKVSGKVKETTGKVTGDEK) are disordered.

Belongs to the UPF0337 (CsbD) family.

The chain is UPF0337 protein YhjA (yhjA) from Lactococcus lactis subsp. lactis (strain IL1403) (Streptococcus lactis).